The following is a 156-amino-acid chain: Small ribosomal subunit protein uS7 (156 aa).

It belongs to the universal ribosomal protein uS7 family. As to quaternary structure, part of the 30S ribosomal subunit. Contacts proteins S9 and S11.

One of the primary rRNA binding proteins, it binds directly to 16S rRNA where it nucleates assembly of the head domain of the 30S subunit. Is located at the subunit interface close to the decoding center, probably blocks exit of the E-site tRNA. The protein is Small ribosomal subunit protein uS7 of Novosphingobium aromaticivorans (strain ATCC 700278 / DSM 12444 / CCUG 56034 / CIP 105152 / NBRC 16084 / F199).